A 152-amino-acid chain; its full sequence is Succinate dehydrogenase [ubiquinone] cytochrome b small subunit B, mitochondrial (152 aa).

The transit peptide at 1 to 21 directs the protein to the mitochondrion; sequence MATLLRVSSLCRANRASAFKS. The Mitochondrial matrix segment spans residues 22–56; it reads LLIRPLPCLSQDLHMVQTSQIHTSPNHHAGSKAAS. A helical membrane pass occupies residues 57–78; the sequence is MHWTGERALSVALLGLLPAAYL. The Mitochondrial intermembrane portion of the chain corresponds to 79–83; sequence YPGAA. A helical transmembrane segment spans residues 84-104; it reads MDYSLAAALTLHGHWGLGQVV. Position 95 (histidine 95) interacts with heme b. Residues 105–113 lie on the Mitochondrial matrix side of the membrane; sequence TDYVHGETK. Tyrosine 107 provides a ligand contact to a ubiquinone. Residues 114–135 form a helical membrane-spanning segment; that stretch reads IKMANTSLFALSALTFAGLCYF. At 136–152 the chain is on the mitochondrial intermembrane side; that stretch reads NYHDVGICKAVAMLWSL.

It belongs to the CybS family. In terms of assembly, component of complex II composed of four subunits: the flavoprotein (FP) SDHA, iron-sulfur protein (IP) SDHB, and a cytochrome b560 composed of SDHC and SDHD.

Its subcellular location is the mitochondrion inner membrane. Its pathway is carbohydrate metabolism; tricarboxylic acid cycle. In terms of biological role, membrane-anchoring subunit of succinate dehydrogenase (SDH) that is involved in complex II of the mitochondrial electron transport chain and is responsible for transferring electrons from succinate to ubiquinone (coenzyme Q). SDH also oxidizes malate to the non-canonical enol form of oxaloacetate, enol-oxaloacetate. Enol-oxaloacetate, which is a potent inhibitor of the succinate dehydrogenase activity, is further isomerized into keto-oxaloacetate. The sequence is that of Succinate dehydrogenase [ubiquinone] cytochrome b small subunit B, mitochondrial (sdhd-b) from Xenopus laevis (African clawed frog).